The sequence spans 82 residues: UPF0235 protein Pden_2174 (82 aa).

Belongs to the UPF0235 family.

In Paracoccus denitrificans (strain Pd 1222), this protein is UPF0235 protein Pden_2174.